The following is a 315-amino-acid chain: Olfactory receptor 56A3 (315 aa).

The Extracellular portion of the chain corresponds to 1 to 29 (MTTHRNDTLSTEASDFLLNCFVRSPSWQH). Residue Asn6 is glycosylated (N-linked (GlcNAc...) asparagine). A helical transmembrane segment spans residues 30 to 50 (WLSLPLSLLFLLAVGANTTLL). Residues 51–58 (MTIWLEAS) are Cytoplasmic-facing. A helical transmembrane segment spans residues 59 to 79 (LHQPLYYLLSLLSLLDIVLCL). The Extracellular portion of the chain corresponds to 80 to 103 (TVIPKVLTIFWFDLRPISFPACFL). Cys101 and Cys193 form a disulfide bridge. The chain crosses the membrane as a helical span at residues 104–124 (QMYIMNCFLAMESCTFMVMAY). The Cytoplasmic portion of the chain corresponds to 125 to 143 (DRYVAICHPLRYPSIITDH). The helical transmembrane segment at 144–164 (FVVKAAMFILTRNVLMTLPIP) threads the bilayer. The Extracellular segment spans residues 165–200 (ILSAQLRYCGRNVIENCICANMSVSRLSCDDVTINH). The N-linked (GlcNAc...) asparagine glycan is linked to Asn185. The chain crosses the membrane as a helical span at residues 201 to 221 (LYQFAGGWTLLGSDLILIFLS). Over 222 to 241 (YTFILRAVLRLKAEGAVAKA) the chain is Cytoplasmic. Residues 242-262 (LSTCGSHFMLILFFSTILLVF) form a helical membrane-spanning segment. The Extracellular portion of the chain corresponds to 263–277 (VLTHVAKKKVSPDVP). The chain crosses the membrane as a helical span at residues 278–298 (VLLNVLHHVIPAALNPIIYGV). Residues 299–315 (RTQEIKQGMQRLLKKGC) are Cytoplasmic-facing.

The protein belongs to the G-protein coupled receptor 1 family.

It localises to the cell membrane. In terms of biological role, odorant receptor. The polypeptide is Olfactory receptor 56A3 (OR56A3) (Homo sapiens (Human)).